The following is a 255-amino-acid chain: Acetylglutamate kinase (255 aa).

Residues 40–41 (GG), arginine 62, and asparagine 153 contribute to the substrate site.

Belongs to the acetylglutamate kinase family. ArgB subfamily.

Its subcellular location is the cytoplasm. The enzyme catalyses N-acetyl-L-glutamate + ATP = N-acetyl-L-glutamyl 5-phosphate + ADP. Its pathway is amino-acid biosynthesis; L-arginine biosynthesis; N(2)-acetyl-L-ornithine from L-glutamate: step 2/4. In terms of biological role, catalyzes the ATP-dependent phosphorylation of N-acetyl-L-glutamate. This chain is Acetylglutamate kinase, found in Bacillus cereus (strain G9842).